We begin with the raw amino-acid sequence, 248 residues long: PF03932 family protein CutC (248 aa).

Belongs to the CutC family. As to quaternary structure, homodimer.

The protein resides in the cytoplasm. The protein is PF03932 family protein CutC of Escherichia coli (strain 55989 / EAEC).